Here is a 373-residue protein sequence, read N- to C-terminus: Forkhead box protein E1 (373 aa).

Residues Lys19–Arg51 are disordered. Residues Gly41–Gln50 are compositionally biased toward basic residues. Positions Lys53–Lys147 form a DNA-binding region, fork-head.

Post-translationally, phosphorylated. In terms of tissue distribution, detected in adult brain, placenta, lung, liver, skeletal muscle, kidney, pancreas, heart, colon, small intestine testis and thymus. Expression was strongest in heart and pancreas.

The protein resides in the nucleus. Functionally, transcription factor that binds consensus sites on a variety of gene promoters and activate their transcription. Involved in proper palate formation, most probably through the expression of MSX1 and TGFB3 genes which are direct targets of this transcription factor. Also implicated in thyroid gland morphogenesis. May indirectly play a role in cell growth and migration through the regulation of WNT5A expression. This Homo sapiens (Human) protein is Forkhead box protein E1 (FOXE1).